Reading from the N-terminus, the 547-residue chain is Glucose-6-phosphate isomerase (547 aa).

E352 (proton donor) is an active-site residue. Catalysis depends on residues H383 and K511.

The protein belongs to the GPI family.

It is found in the cytoplasm. The enzyme catalyses alpha-D-glucose 6-phosphate = beta-D-fructose 6-phosphate. Its pathway is carbohydrate biosynthesis; gluconeogenesis. It participates in carbohydrate degradation; glycolysis; D-glyceraldehyde 3-phosphate and glycerone phosphate from D-glucose: step 2/4. Catalyzes the reversible isomerization of glucose-6-phosphate to fructose-6-phosphate. This Magnetococcus marinus (strain ATCC BAA-1437 / JCM 17883 / MC-1) protein is Glucose-6-phosphate isomerase.